Consider the following 554-residue polypeptide: Glucose-6-phosphate isomerase (554 aa).

Glu-359 acts as the Proton donor in catalysis. Active-site residues include His-390 and Lys-518.

Belongs to the GPI family.

The protein localises to the cytoplasm. It carries out the reaction alpha-D-glucose 6-phosphate = beta-D-fructose 6-phosphate. It participates in carbohydrate biosynthesis; gluconeogenesis. Its pathway is carbohydrate degradation; glycolysis; D-glyceraldehyde 3-phosphate and glycerone phosphate from D-glucose: step 2/4. Its function is as follows. Catalyzes the reversible isomerization of glucose-6-phosphate to fructose-6-phosphate. In Pseudomonas putida (strain ATCC 700007 / DSM 6899 / JCM 31910 / BCRC 17059 / LMG 24140 / F1), this protein is Glucose-6-phosphate isomerase.